The following is a 183-amino-acid chain: Adenine phosphoribosyltransferase (183 aa).

This sequence belongs to the purine/pyrimidine phosphoribosyltransferase family. Homodimer.

Its subcellular location is the cytoplasm. The enzyme catalyses AMP + diphosphate = 5-phospho-alpha-D-ribose 1-diphosphate + adenine. Its pathway is purine metabolism; AMP biosynthesis via salvage pathway; AMP from adenine: step 1/1. In terms of biological role, catalyzes a salvage reaction resulting in the formation of AMP, that is energically less costly than de novo synthesis. The protein is Adenine phosphoribosyltransferase of Shewanella sp. (strain MR-7).